We begin with the raw amino-acid sequence, 474 residues long: Trigger factor (474 aa).

The region spanning 171–258 is the PPIase FKBP-type domain; the sequence is GDVAVIDFQG…LKELKTRDLP (88 aa). The disordered stretch occupies residues 441 to 474; it reads TEVDAASATVETTATETAEEAPEAPKAKKGKKKA. Residues 444 to 456 are compositionally biased toward low complexity; sequence DAASATVETTATE.

Belongs to the FKBP-type PPIase family. Tig subfamily.

The protein localises to the cytoplasm. The catalysed reaction is [protein]-peptidylproline (omega=180) = [protein]-peptidylproline (omega=0). Functionally, involved in protein export. Acts as a chaperone by maintaining the newly synthesized protein in an open conformation. Functions as a peptidyl-prolyl cis-trans isomerase. In Synechococcus elongatus (strain ATCC 33912 / PCC 7942 / FACHB-805) (Anacystis nidulans R2), this protein is Trigger factor.